The sequence spans 468 residues: ATP synthase subunit beta (468 aa).

148–155 contributes to the ATP binding site; it reads GGAGVGKT.

It belongs to the ATPase alpha/beta chains family. F-type ATPases have 2 components, CF(1) - the catalytic core - and CF(0) - the membrane proton channel. CF(1) has five subunits: alpha(3), beta(3), gamma(1), delta(1), epsilon(1). CF(0) has three main subunits: a(1), b(2) and c(9-12). The alpha and beta chains form an alternating ring which encloses part of the gamma chain. CF(1) is attached to CF(0) by a central stalk formed by the gamma and epsilon chains, while a peripheral stalk is formed by the delta and b chains.

It is found in the cell inner membrane. It catalyses the reaction ATP + H2O + 4 H(+)(in) = ADP + phosphate + 5 H(+)(out). In terms of biological role, produces ATP from ADP in the presence of a proton gradient across the membrane. The catalytic sites are hosted primarily by the beta subunits. The polypeptide is ATP synthase subunit beta (Stenotrophomonas maltophilia (strain R551-3)).